A 234-amino-acid polypeptide reads, in one-letter code: Small ribosomal subunit protein eS1y (234 aa).

Over residues Met-1–Lys-18 the composition is skewed to basic residues. Residues Met-1–Ala-20 form a disordered region.

The protein belongs to the eukaryotic ribosomal protein eS1 family. Component of the small ribosomal subunit. Mature ribosomes consist of a small (40S) and a large (60S) subunit. The 40S subunit contains about 33 different proteins and 1 molecule of RNA (18S). The 60S subunit contains about 49 different proteins and 3 molecules of RNA (25S, 5.8S and 5S).

Its subcellular location is the cytoplasm. This Vitis vinifera (Grape) protein is Small ribosomal subunit protein eS1y.